The primary structure comprises 201 residues: Peptidyl-tRNA hydrolase (201 aa).

Tyrosine 14 contributes to the tRNA binding site. Histidine 19 (proton acceptor) is an active-site residue. TRNA-binding residues include tyrosine 64, asparagine 66, and asparagine 112.

This sequence belongs to the PTH family. As to quaternary structure, monomer.

The protein resides in the cytoplasm. It catalyses the reaction an N-acyl-L-alpha-aminoacyl-tRNA + H2O = an N-acyl-L-amino acid + a tRNA + H(+). Hydrolyzes ribosome-free peptidyl-tRNAs (with 1 or more amino acids incorporated), which drop off the ribosome during protein synthesis, or as a result of ribosome stalling. In terms of biological role, catalyzes the release of premature peptidyl moieties from peptidyl-tRNA molecules trapped in stalled 50S ribosomal subunits, and thus maintains levels of free tRNAs and 50S ribosomes. The chain is Peptidyl-tRNA hydrolase from Bradyrhizobium sp. (strain ORS 278).